Reading from the N-terminus, the 373-residue chain is Lipoyl amidotransferase LIPT1, mitochondrial (373 aa).

A mitochondrion-targeting transit peptide spans 1–25 (MLIPFSMKNCFQLLCNCQVPAAGFK). The BPL/LPL catalytic domain occupies 57 to 243 (LEGKPILFFW…EYAAYHQIDN (187 aa)). (R)-lipoyl-5'-AMP is bound by residues Tyr107, Arg151, Lys161, and Thr179.

Belongs to the LplA family. Highly expressed in skeletal muscle and heart, moderately in kidney and pancreas, and detected at lower levels in liver, brain, placenta and lung.

The protein resides in the mitochondrion. The catalysed reaction is N(6)-[(R)-lipoyl]-L-lysyl-[glycine-cleavage complex H protein] + L-lysyl-[lipoyl-carrier protein] = L-lysyl-[glycine-cleavage complex H protein] + N(6)-[(R)-lipoyl]-L-lysyl-[lipoyl-carrier protein]. It catalyses the reaction (R)-lipoyl-5'-AMP + L-lysyl-[lipoyl-carrier protein] = N(6)-[(R)-lipoyl]-L-lysyl-[lipoyl-carrier protein] + AMP + 2 H(+). It functions in the pathway protein modification; protein lipoylation via exogenous pathway; protein N(6)-(lipoyl)lysine from lipoate: step 2/2. In terms of biological role, lipoyl amidotransferase that catalyzes the transfer of lipoyl moieties from lipoyl-protein H of the glycine cleavage system (lipoyl-GCSH) to E2 subunits of the pyruvate dehydrogenase complex (PDCE2). Unable to catalyze the transfer of octanoyl from octanoyl-GCSH to PDCE2. In vitro, it is also able to catalyze the transfer of the lipoyl group from lipoyl-AMP to the specific lysine residue of lipoyl domains of lipoate-dependent enzymes but this reaction may not be physiologically relevant. This Homo sapiens (Human) protein is Lipoyl amidotransferase LIPT1, mitochondrial.